The sequence spans 220 residues: MERHVLVVFPHPDDEAYAAGGTIRLLTDQGVPVTYACGTLGQMGRNMGKNVFANRETIPHIRKKELKDACEAMGIKDLRMLGFHDKTLEFEDVDFVADKIEAIIQEVNPSRIITFYPEHGVHPDHNAFGRAVVRAVSRMPKEERPVIHAVAITKNREAVLGEPDVVNNISEVFDHKLTALGAHRSQTEAMLEDTHAKIKNKDAATLKWLQLEQFWTYKWE.

Positions 11, 14, and 125 each coordinate Zn(2+).

Belongs to the PIGL family. Zn(2+) is required as a cofactor.

The catalysed reaction is (S)-malyl N-acetyl-alpha-D-glucosaminide + H2O = (S)-malyl alpha-D-glucosaminide + acetate. Its function is as follows. Involved in bacillithiol (BSH) biosynthesis. Catalyzes the second step of the pathway, the deacetylation of N-acetylglucosaminylmalate (GlcNAc-Mal) to glucosamine malate (GlcN-Mal). Has weak activity compared with bshB1. The protein is Probable N-acetyl-alpha-D-glucosaminyl L-malate deacetylase 2 of Bacillus cereus (strain ATCC 14579 / DSM 31 / CCUG 7414 / JCM 2152 / NBRC 15305 / NCIMB 9373 / NCTC 2599 / NRRL B-3711).